We begin with the raw amino-acid sequence, 119 residues long: Large ribosomal subunit protein uL14 (119 aa).

The protein belongs to the universal ribosomal protein uL14 family. In terms of assembly, part of the 50S ribosomal subunit. Forms a cluster with proteins L3 and L19. In the 70S ribosome, L14 and L19 interact and together make contacts with the 16S rRNA in bridges B5 and B8.

Binds to 23S rRNA. Forms part of two intersubunit bridges in the 70S ribosome. This chain is Large ribosomal subunit protein uL14, found in Ehrlichia ruminantium (strain Gardel).